Consider the following 842-residue polypeptide: MNKITKYIDALPLSDAEKSALPDTSLQAVHQALDDEHQTFAREDDSPLGSVKARLAHSWPDSLSGDQLVKDDEGRTQLHAMPKARRSSMIPDPWRTNPVGRFWDRLRGRDVTPRYLSRLTQEERESEQKWRTVGTIRRYILLLLTLSQTVVATWYMKTILPYQGWALINPADMVGQNLWISFMQLLPYVLQSGILILFAVLFCWVSAGFWTALMGFLQLLIGRDKYSISASTVGDEPLNPAHRTALIMPICNEDVDRVFAGLRATWESVKATGNAAHFDVYILSDSYNPDICVAEQKAWMELIAEVQGEGQIFYRRRRRRVKRKSGNIDDFCRRWGSQYSYMVVLDADSVMTGECLSSLVRLMEANPNAGIIQSSPRASGMDTLYARCQQFATRVYGPLFTAGLHFWQLGESHYWGHNAIIRVKPFIEHCALAPLPGEGNFAGSILSHDFVEAALMRRAGWGVWIAYDLPGSYEELPPNLLDELKRDRRWCQGNLMNFRLFLVRGMHPVHRAVFLTGVMSYLSAPLWFMFLALSTALQVVHALTEPQYFLQPRQLFPVWPQWRPELAIALFASTMVLLFLPKLLSIILVWCKGPKEYGGFIRVTLSLLLEVLFSVLLAPVRMLFHTVFVVSAFLGWEVVWNSPQRDDDSTPWGEAFMRHGSQLLLGLVWAVGMAWLDLRFLFWLAPIVVSLILSPFVSAISSRATVGLRTKRWKLFLIPEEYSPPQVLKDTDAYLTLNRQRSLDDGFMHAVFNPSFNALATAMATARHRHGHILEIARERHVEQALNETPDKLNRDRRLVLLSDPVTMSRLHYRVWAAPEKYSSWVNAYQQLALNPLALKTK.

8 helical membrane passes run 140–160, 194–214, 513–533, 568–588, 600–620, 622–642, 656–676, and 680–700; these read ILLLLTLSQTVVATWYMKTIL, ILILFAVLFCWVSAGFWTALM, VFLTGVMSYLSAPLWFMFLAL, IALFASTMVLLFLPKLLSIIL, FIRVTLSLLLEVLFSVLLAPV, MLFHTVFVVSAFLGWEVVWNS, FMRHGSQLLLGLVWAVGMAWL, and FLFWLAPIVVSLILSPFVSAI.

Belongs to the glycosyltransferase 2 family. OpgH subfamily.

The protein localises to the cell inner membrane. Its pathway is glycan metabolism; osmoregulated periplasmic glucan (OPG) biosynthesis. Involved in the biosynthesis of osmoregulated periplasmic glucans (OPGs). The protein is Glucans biosynthesis glucosyltransferase H of Klebsiella pneumoniae (strain 342).